We begin with the raw amino-acid sequence, 85 residues long: Large ribosomal subunit protein bL27 (85 aa).

The disordered stretch occupies residues 1-22; the sequence is MAHKKAGGSTRNGRDSESKRLG.

Belongs to the bacterial ribosomal protein bL27 family.

The protein is Large ribosomal subunit protein bL27 of Vibrio parahaemolyticus serotype O3:K6 (strain RIMD 2210633).